Here is a 495-residue protein sequence, read N- to C-terminus: WD repeat-containing protein 37 (495 aa).

2 stretches are compositionally biased toward polar residues: residues 1–13 (MPTESASCSTARQ) and 22–31 (SLSIRRTNSS). A disordered region spans residues 1 to 50 (MPTESASCSTARQTKQKRKSHSLSIRRTNSSEQERTGLPRDMLEGQDSKL). The span at 32 to 47 (EQERTGLPRDMLEGQD) shows a compositional bias: basic and acidic residues. 2 WD repeats span residues 154-194 (GHRD…CLVK) and 197-236 (GHVGSVNSIKFHPSEQLALTASGDQTAHIWRYAVQLPTPQ). Residues 237-266 (PVADTSQISGEDEVECSDKDEPDLDGDVSS) form a disordered region. Over residues 246–264 (GEDEVECSDKDEPDLDGDV) the composition is skewed to acidic residues. 5 WD repeats span residues 280–319 (SHQGVVIAADWLVGGKQAVTASWDRTANLYDVETSELVHS), 322–361 (GHDQELTHCCTHPTQRLVVTSSRDTTFRLWDFRDPSIHSV), 366–404 (GHTDTVTSAVFTVGDNVVSGSDDRTVKVWDLKNMRSPIA), 407–446 (RTDSAINRINVCVGQKIIALPHDNRQVRLFDMSGVRLARL), and 453–494 (GHRR…LLQE).

Forms homodimers. Interacts with PACS1. Interacts with PACS2.

Its subcellular location is the cytoplasm. It localises to the nucleus. Its function is as follows. Required for normal ER Ca2+ handling in lymphocytes. Together with PACS1, it plays an essential role in stabilizing peripheral lymphocyte populations. This chain is WD repeat-containing protein 37 (WDR37), found in Pongo abelii (Sumatran orangutan).